Reading from the N-terminus, the 453-residue chain is Tubulin alpha-2 chain (453 aa).

Gln-11 contributes to the GTP binding site. The residue at position 40 (Lys-40) is an N6-acetyllysine. Residues Glu-71, Gly-144, Thr-145, Thr-179, Asn-206, and Asn-228 each contribute to the GTP site. Residue Glu-71 coordinates Mg(2+). The active site involves Glu-254. A disordered region spans residues 432 to 453 (YEEVGAETAEGEGEEEDFGEEY).

It belongs to the tubulin family. In terms of assembly, dimer of alpha and beta chains. A typical microtubule is a hollow water-filled tube with an outer diameter of 25 nm and an inner diameter of 15 nM. Alpha-beta heterodimers associate head-to-tail to form protofilaments running lengthwise along the microtubule wall with the beta-tubulin subunit facing the microtubule plus end conferring a structural polarity. Microtubules usually have 13 protofilaments but different protofilament numbers can be found in some organisms and specialized cells. It depends on Mg(2+) as a cofactor. In terms of processing, undergoes a tyrosination/detyrosination cycle, the cyclic removal and re-addition of a C-terminal tyrosine residue by the enzymes tubulin tyrosine carboxypeptidase (TTCP) and tubulin tyrosine ligase (TTL), respectively. Post-translationally, acetylation of alpha chains at Lys-40 stabilizes microtubules and affects affinity and processivity of microtubule motors. This modification has a role in multiple cellular functions, ranging from cell motility, cell cycle progression or cell differentiation to intracellular trafficking and signaling.

It localises to the cytoplasm. The protein localises to the cytoskeleton. It catalyses the reaction GTP + H2O = GDP + phosphate + H(+). Tubulin is the major constituent of microtubules, a cylinder consisting of laterally associated linear protofilaments composed of alpha- and beta-tubulin heterodimers. Microtubules grow by the addition of GTP-tubulin dimers to the microtubule end, where a stabilizing cap forms. Below the cap, tubulin dimers are in GDP-bound state, owing to GTPase activity of alpha-tubulin. The polypeptide is Tubulin alpha-2 chain (TUBA2) (Pelvetia fastigiata (Brown alga)).